The chain runs to 209 residues: Chaperone protein TorD (209 aa).

Belongs to the TorD/DmsD family. TorD subfamily.

The protein localises to the cytoplasm. Its function is as follows. Involved in the biogenesis of TorA. Acts on TorA before the insertion of the molybdenum cofactor and, as a result, probably favors a conformation of the apoenzyme that is competent for acquiring the cofactor. The sequence is that of Chaperone protein TorD from Shewanella massilia.